Here is a 351-residue protein sequence, read N- to C-terminus: Translation initiation factor eIF2B subunit beta (351 aa).

It belongs to the eIF-2B alpha/beta/delta subunits family. In terms of assembly, component of the translation initiation factor 2B (eIF2B) complex which is a heterodecamer of two sets of five different subunits: alpha, beta, gamma, delta and epsilon. Subunits alpha, beta and delta comprise a regulatory subcomplex and subunits epsilon and gamma comprise a catalytic subcomplex. Within the complex, the hexameric regulatory complex resides at the center, with the two heterodimeric catalytic subcomplexes bound on opposite sides.

It localises to the cytoplasm. It is found in the cytosol. With respect to regulation, activated by the chemical integrated stress response (ISR) inhibitor ISRIB which stimulates guanine nucleotide exchange factor activity for both phosphorylated and unphosphorylated eIF2. In terms of biological role, acts as a component of the translation initiation factor 2B (eIF2B) complex, which catalyzes the exchange of GDP for GTP on eukaryotic initiation factor 2 (eIF2) gamma subunit. Its guanine nucleotide exchange factor activity is repressed when bound to eIF2 complex phosphorylated on the alpha subunit, thereby limiting the amount of methionyl-initiator methionine tRNA available to the ribosome and consequently global translation is repressed. The sequence is that of Translation initiation factor eIF2B subunit beta (EIF2B2) from Bos taurus (Bovine).